Consider the following 314-residue polypeptide: Glycine--tRNA ligase alpha subunit (314 aa).

It belongs to the class-II aminoacyl-tRNA synthetase family. In terms of assembly, tetramer of two alpha and two beta subunits.

Its subcellular location is the cytoplasm. The catalysed reaction is tRNA(Gly) + glycine + ATP = glycyl-tRNA(Gly) + AMP + diphosphate. This Mesorhizobium japonicum (strain LMG 29417 / CECT 9101 / MAFF 303099) (Mesorhizobium loti (strain MAFF 303099)) protein is Glycine--tRNA ligase alpha subunit.